We begin with the raw amino-acid sequence, 739 residues long: MAVSERRLLAAMLAVAAAAALRVAAESEPGWDVAAPDLLYAEGTAAYSRGDWPGVVLNMERALRSRAALRALRLRCRTRCATELPWAPDLDLGPDPSLSQDPGAAALHDLRFFGAVLRRAACLRRCLGPPSAHLLSEELDLEFNKRSPYNYLQVAYFKINKLEKAVAAAHTFFVGNPEHMEMRQNLDYYQTMSGVKEADFRDLEAKPHMHEFRLGVRLYSEEKPQEAVPHLEAALQEYFVADEECRALCEGPYDYDGYNYLDYSADLFQAITDHYVQVLNCKQNCVTELASHPSREKPFEDFLPSHYNYLQFAYYNIGNYTQAIECAKTYLLFFPNDEVMHQNLAYYTAMLGEEEASSISPRENAEEYRRRSLLEKELLFFAYDIFGIPFVDPDSWTPEEVIPKRLQEKQKSERETAVRISQEIGNLMKEIETLVEEKTKESLDVSRLTREGGPLLYEGISLTMNSKVLNGSQRVVMDGVISDDECQELQRLTNAAATSGDGYRGQTSPHTPNEKFYGVTVLKALKLGQEGKVPLQSARMYYNVTEKVRRVMESYFRLDTPLYFSYSHLVCRTAIEESQAERKDSSHPVHVDNCILNAEALMCIKEPPAYTFRDYSAILYLNGDFDGGNFYFTELDAKTVTAEVQPQCGRAVGFSSGTENPHGVKAVTRGQRCAIALWFTLDPRHSERDRVQADDLVKMLFSPEEVDLPQEQPLPDQQGSPEPGEESLSDRGSLHKDEL.

The N-terminal stretch at 1–25 (MAVSERRLLAAMLAVAAAAALRVAA) is a signal peptide. 4 TPR repeats span residues 36-69 (PDLLYAEGTAAYSRGDWPGVVLNMERALRSRAAL), 146-179 (RSPYNYLQVAYFKINKLEKAVAAAHTFFVGNPEH), 208-241 (HMHEFRLGVRLYSEEKPQEAVPHLEAALQEYFVA), and 304-337 (PSHYNYLQFAYYNIGNYTQAIECAKTYLLFFPND). N319 is a glycosylation site (N-linked (GlcNAc...) asparagine). Positions 404-442 (KRLQEKQKSERETAVRISQEIGNLMKEIETLVEEKTKES) form a coiled coil. N470 and N543 each carry an N-linked (GlcNAc...) asparagine glycan. Positions 567 to 681 (SHLVCRTAIE…RCAIALWFTL (115 aa)) constitute a Fe2OG dioxygenase domain. Fe cation is bound by residues H590, D592, and H662. R672 is an active-site residue. The disordered stretch occupies residues 702–739 (SPEEVDLPQEQPLPDQQGSPEPGEESLSDRGSLHKDEL). Over residues 709 to 718 (PQEQPLPDQQ) the composition is skewed to low complexity. The span at 728–739 (LSDRGSLHKDEL) shows a compositional bias: basic and acidic residues. Positions 736-739 (KDEL) match the Prevents secretion from ER motif.

This sequence belongs to the leprecan family. Fe cation is required as a cofactor. L-ascorbate serves as cofactor. O-glycosylated; chondroitin sulfate.

The protein resides in the endoplasmic reticulum. It localises to the secreted. It is found in the extracellular space. Its subcellular location is the extracellular matrix. The catalysed reaction is L-prolyl-[collagen] + 2-oxoglutarate + O2 = trans-3-hydroxy-L-prolyl-[collagen] + succinate + CO2. Basement membrane-associated chondroitin sulfate proteoglycan (CSPG). Has prolyl 3-hydroxylase activity catalyzing the post-translational formation of 3-hydroxyproline in -Xaa-Pro-Gly- sequences in collagens, especially types IV and V. May be involved in the secretory pathway of cells. Has growth suppressive activity in fibroblasts. This chain is Prolyl 3-hydroxylase 1, found in Mus musculus (Mouse).